The following is a 313-amino-acid chain: MNRLAVELPGLSLKNPIMPASGCFGFGREYAQFYDLSKLGAIMIKATTKEPRFGNPTPRVAETPGGMLNAIGLQNPGLQKVLEEELPWLAQFDVPIIANVAGSTMEEYVEVAKHISKAPNVHALELNISCPNVKKGGIAFGTVPEIAAELTKLVKEVSEVPVYVKLSPNVTNIVEMAKAIEAAGADGLTMINTLLGMRIDVKTAKPILANRTGGLSGPAIKPIAIRMIYEVSQAVSIPIIGMGGIQSAEDVIEFFYAGASAVAIGTANFIDPFVCPNIIAELPVLLDELGIDHISECMGRSWKKGERSVYCGA.

FMN contacts are provided by residues Ser-21 and 45 to 46; that span reads KA. Substrate is bound by residues Lys-45 and 69-73; that span reads NAIGL. Residues Asn-99 and Asn-127 each contribute to the FMN site. A substrate-binding site is contributed by Asn-127. The active-site Nucleophile is the Cys-130. FMN contacts are provided by Lys-165 and Ile-191. Residue 192–193 participates in substrate binding; it reads NT. FMN-binding positions include Gly-217, 243 to 244, and 265 to 266; these read GG and GT.

Belongs to the dihydroorotate dehydrogenase family. Type 1 subfamily. As to quaternary structure, heterotetramer of 2 PyrK and 2 PyrD type B subunits. The cofactor is FMN.

Its subcellular location is the cytoplasm. It carries out the reaction (S)-dihydroorotate + NAD(+) = orotate + NADH + H(+). It functions in the pathway pyrimidine metabolism; UMP biosynthesis via de novo pathway; orotate from (S)-dihydroorotate (NAD(+) route): step 1/1. Its function is as follows. Catalyzes the conversion of dihydroorotate to orotate with NAD(+) as electron acceptor. This chain is Dihydroorotate dehydrogenase B (NAD(+)), catalytic subunit (pyrD), found in Geobacillus sp. (strain WCH70).